A 412-amino-acid chain; its full sequence is Mitochondrial distribution and morphology protein 12 (412 aa).

The 410-residue stretch at 1–410 (MSIDLEWAKL…FPNFHTLVMG (410 aa)) folds into the SMP-LTD domain. 4 disordered regions span residues 66–96 (EDDE…DGYE), 108–136 (YTEG…SPTD), 166–238 (QGSG…QQEN), and 314–354 (PAGD…KPLP). Over residues 220–238 (NQPVFPSQQPQQQQPQQEN) the composition is skewed to low complexity.

Belongs to the MDM12 family. In terms of assembly, component of the ER-mitochondria encounter structure (ERMES) or MDM complex, composed of MMM1, MDM10, MDM12 and MDM34. An MMM1 homodimer associates with one molecule of MDM12 on each side in a pairwise head-to-tail manner, and the SMP-LTD domains of MMM1 and MDM12 generate a continuous hydrophobic tunnel for phospholipid trafficking.

Its subcellular location is the mitochondrion outer membrane. It is found in the endoplasmic reticulum membrane. In terms of biological role, component of the ERMES/MDM complex, which serves as a molecular tether to connect the endoplasmic reticulum (ER) and mitochondria. Components of this complex are involved in the control of mitochondrial shape and protein biogenesis, and function in nonvesicular lipid trafficking between the ER and mitochondria. MDM12 is required for the interaction of the ER-resident membrane protein MMM1 and the outer mitochondrial membrane-resident beta-barrel protein MDM10. The MDM12-MMM1 subcomplex functions in the major beta-barrel assembly pathway that is responsible for biogenesis of all mitochondrial outer membrane beta-barrel proteins, and acts in a late step after the SAM complex. The MDM10-MDM12-MMM1 subcomplex further acts in the TOM40-specific pathway after the action of the MDM12-MMM1 complex. Essential for establishing and maintaining the structure of mitochondria and maintenance of mtDNA nucleoids. The protein is Mitochondrial distribution and morphology protein 12 of Coprinopsis cinerea (strain Okayama-7 / 130 / ATCC MYA-4618 / FGSC 9003) (Inky cap fungus).